A 334-amino-acid polypeptide reads, in one-letter code: MQRSVHELLTPRTIDVKESSATRAKVTLEPLERGFGHTLGSALRRILLSSMPGCAVTEAQIDGVLHEYSAIEGVQEDVIEILLNLKGVAVKMNGRDDAELTLSKKGPGVVTAGDIKLDHDVEIANPEHVICHLSENGEVNMRLRVARGRGYEPADQRGLDEDETRAIGRLQLDATFSPVRRVAYAVESARVEQRTDLDKLVIDLETNGTIDPEEAIRRAATILQQQLAVFVDFDHEKEPERVEEEEEIDPILLRPVDDLELTVRSANCLKAENIYYIGDLIQRTEVELLKTPNLGKKSLTEIKDVLASRGLSLGMRLDNWPPASLRGDDRVLGG.

Positions 1-234 (MQRSVHELLT…QQLAVFVDFD (234 aa)) are alpha N-terminal domain (alpha-NTD). The alpha C-terminal domain (alpha-CTD) stretch occupies residues 248–334 (IDPILLRPVD…LRGDDRVLGG (87 aa)).

The protein belongs to the RNA polymerase alpha chain family. As to quaternary structure, homodimer. The RNAP catalytic core consists of 2 alpha, 1 beta, 1 beta' and 1 omega subunit. When a sigma factor is associated with the core the holoenzyme is formed, which can initiate transcription.

The enzyme catalyses RNA(n) + a ribonucleoside 5'-triphosphate = RNA(n+1) + diphosphate. DNA-dependent RNA polymerase catalyzes the transcription of DNA into RNA using the four ribonucleoside triphosphates as substrates. The polypeptide is DNA-directed RNA polymerase subunit alpha (Marinobacter nauticus (strain ATCC 700491 / DSM 11845 / VT8) (Marinobacter aquaeolei)).